The following is a 642-amino-acid chain: Threonine--tRNA ligase (642 aa).

Residues 1-61 enclose the TGS domain; the sequence is MPVVTLPDGS…DSDANLAIIT (61 aa). Residues 243–534 are catalytic; the sequence is DHRKIGKQLD…LTEEYAGFFP (292 aa). C334, H385, and H511 together coordinate Zn(2+).

It belongs to the class-II aminoacyl-tRNA synthetase family. In terms of assembly, homodimer. It depends on Zn(2+) as a cofactor.

It localises to the cytoplasm. It catalyses the reaction tRNA(Thr) + L-threonine + ATP = L-threonyl-tRNA(Thr) + AMP + diphosphate + H(+). Catalyzes the attachment of threonine to tRNA(Thr) in a two-step reaction: L-threonine is first activated by ATP to form Thr-AMP and then transferred to the acceptor end of tRNA(Thr). Also edits incorrectly charged L-seryl-tRNA(Thr). This chain is Threonine--tRNA ligase, found in Photorhabdus laumondii subsp. laumondii (strain DSM 15139 / CIP 105565 / TT01) (Photorhabdus luminescens subsp. laumondii).